The sequence spans 146 residues: HTH-type transcriptional regulator FarR (146 aa).

Positions 7–139 (HASINIGLIQ…LKDLLAELAK (133 aa)) constitute an HTH marR-type domain. Residues 53–76 (FQDLANQACILRPSLTGILTRLEK) constitute a DNA-binding region (H-T-H motif).

Repressor activity requires the presence of the Integration Host Factor (IHF), which binds to sequences located between FarR binding sites A and C. IHF binding to the promoter region stabilizes the binding of FarR to its binding sites A and C and as a consequence, enhances repression of the farAB operon. Its function is as follows. Negatively controls expression of the farAB operon by binding directly to the farAB promoter region. Binds to three sites (sites A, B and C) within the DNA sequence upstream of farA. Also represses its own expression. This chain is HTH-type transcriptional regulator FarR, found in Neisseria gonorrhoeae.